We begin with the raw amino-acid sequence, 252 residues long: Triosephosphate isomerase (252 aa).

Asn10–Lys12 is a substrate binding site. Catalysis depends on His96, which acts as the Electrophile. Residue Glu168 is the Proton acceptor of the active site. Substrate contacts are provided by residues Gly174, Ser214, and Gly235–Gly236.

This sequence belongs to the triosephosphate isomerase family. As to quaternary structure, homodimer.

Its subcellular location is the cytoplasm. The catalysed reaction is D-glyceraldehyde 3-phosphate = dihydroxyacetone phosphate. The protein operates within carbohydrate biosynthesis; gluconeogenesis. Its pathway is carbohydrate degradation; glycolysis; D-glyceraldehyde 3-phosphate from glycerone phosphate: step 1/1. Functionally, involved in the gluconeogenesis. Catalyzes stereospecifically the conversion of dihydroxyacetone phosphate (DHAP) to D-glyceraldehyde-3-phosphate (G3P). In Streptococcus mutans serotype c (strain ATCC 700610 / UA159), this protein is Triosephosphate isomerase.